The sequence spans 467 residues: MAAHGGSAASSALKGLIQQFTAITGASESVGKHMLEACNNNLEMAVTMFLDGGGIAEEPSTSSASVSTVRPHTEEEVRAPIPQKQEILVEPEPLFGVRQEQELRNGGAIDKKLTTLADLFRPPIDLMHKGSFETAKECGQMQNKWLMINIQNVQDFACQCLNRDVWSNEAVKNIIREHFIFWQVYHDSEEGQRYIQFYKLGDFPYVSILDPRTGQKLVEWHQLDVSSFLDQVTGFLGEHGQLDGLSSSPPKKCARSESLIDASEDSQLEAAIRASLQETHFDSAQAKQDSRSDEESESELFSGSEEFISVCGSDEEEEVENLAKSRKSPHKDLGHRKEENRRPLTEPPARTEPGTATNHQGLPSMDSEVLEMSPEKSDGIVEGIDVNGPKAQLMLRYPDGKREQITLPEQAKLLALVKHVQSKGYPNERFELLTNFPRRKLSHLDYDITLQEAGLCPQETVFVQERN.

Ala-2 carries the N-acetylalanine modification. The region spanning 2-54 is the UBA domain; sequence AAHGGSAASSALKGLIQQFTAITGASESVGKHMLEACNNNLEMAVTMFLDGGG. The tract at residues 57 to 77 is disordered; it reads EEPSTSSASVSTVRPHTEEEV. Residues 59-70 show a composition bias toward polar residues; that stretch reads PSTSSASVSTVR. Residues Lys-84 and Lys-112 each participate in a glycyl lysine isopeptide (Lys-Gly) (interchain with G-Cter in SUMO2) cross-link. Residues 240 to 260 form a disordered region; sequence GQLDGLSSSPPKKCARSESLI. Residues Ser-256, Ser-258, Ser-263, and Ser-266 each carry the phosphoserine modification. A ubiquitin-interacting motif (UIM) repeat occupies 263–282; it reads SEDSQLEAAIRASLQETHFD. Residues 281–364 form a disordered region; the sequence is FDSAQAKQDS…TATNHQGLPS (84 aa). Basic and acidic residues predominate over residues 330-344; sequence HKDLGHRKEENRRPL. A Phosphoserine modification is found at Ser-373. In terms of domain architecture, UBX spans 386–463; it reads VNGPKAQLML…GLCPQETVFV (78 aa).

As to quaternary structure, interacts with neddylated CUL2, ubiquitinated HIF1A, and VCP/p97.

The protein localises to the nucleus. In terms of biological role, ubiquitin-binding adapter that links a subset of NEDD8-associated cullin ring ligases (CRLs) to the segregase VCP/p97, to regulate turnover of their ubiquitination substrates. The sequence is that of UBX domain-containing protein 7 (Ubxn7) from Mus musculus (Mouse).